A 758-amino-acid polypeptide reads, in one-letter code: Vitamin K-dependent gamma-carboxylase (758 aa).

Positions 1 to 29 are disordered; it reads MAVHRGSARAAPASDKVQKNKPAQTSGLE. N-acetylalanine is present on Ala-2. At 2-60 the chain is on the cytoplasmic side; sequence AVHRGSARAAPASDKVQKNKPAQTSGLEQGSRMARIFGFEWADLSSWQSVVTLLNRPTD. A helical transmembrane segment spans residues 61-81; it reads PANLAVFRFLFAFLMLLDIPQ. Residues 82-113 lie on the Lumenal side of the membrane; sequence ERGLSSLDRKYLDGLDVCRFPLLDALRPLPLD. Cysteines 99 and 450 form a disulfide. A helical transmembrane segment spans residues 114 to 134; the sequence is WMYLVYTIMFLGALGMMLGLW. At 135 to 136 the chain is on the cytoplasmic side; it reads YR. The helical transmembrane segment at 137-157 threads the bilayer; it reads LSCMLFLLPYWYVFLLDKTSW. The Lumenal portion of the chain corresponds to 158–292; it reads NNHSYLYGLL…VSYFHCMNSQ (135 aa). The helical transmembrane segment at 293–313 threads the bilayer; sequence LFSIGMFPYVMLASSPLFCSA. Residues 314–361 lie on the Cytoplasmic side of the membrane; that stretch reads EWPRKLVARCPKRLQELLPAKAAPRPSASCVYKRARAKAGQKPGLRHH. Residues 362-382 traverse the membrane as a helical segment; that stretch reads LGTVFTLLYLLEQLFLPYSHF. Residues 383 to 758 are Lumenal-facing; the sequence is LTQGYNNWTN…PDSEHVHSEL (376 aa). The disordered stretch occupies residues 727–758; the sequence is PFEPVDESSASNTDSSDPHPSEPDSEHVHSEL. A compositionally biased stretch (basic and acidic residues) spans 742–758; sequence SDPHPSEPDSEHVHSEL.

Belongs to the vitamin K-dependent gamma-carboxylase family. As to quaternary structure, monomer. Interacts with CALU.

It is found in the endoplasmic reticulum membrane. The catalysed reaction is 4-carboxy-L-glutamyl-[protein] + 2,3-epoxyphylloquinone + H2O + H(+) = phylloquinol + L-glutamyl-[protein] + CO2 + O2. Mediates the vitamin K-dependent carboxylation of glutamate residues to calcium-binding gamma-carboxyglutamate (Gla) residues with the concomitant conversion of the reduced hydroquinone form of vitamin K to vitamin K epoxide. Catalyzes gamma-carboxylation of various proteins, such as blood coagulation factors (F2, F7, F9 and F10), osteocalcin (BGLAP) or matrix Gla protein (MGP). This Rattus norvegicus (Rat) protein is Vitamin K-dependent gamma-carboxylase (Ggcx).